We begin with the raw amino-acid sequence, 184 residues long: Deoxyuridine 5'-triphosphate nucleotidohydrolase (184 aa).

The span at Met-1–Phe-16 shows a compositional bias: polar residues. The disordered stretch occupies residues Met-1–Pro-25. Substrate-binding positions include Arg-96–Gly-98, Asn-109, Thr-113–Asp-115, and Lys-123. A disordered region spans residues Ser-165–Asp-184. The span at Arg-173–Asp-184 shows a compositional bias: gly residues.

It belongs to the dUTPase family. It depends on Mg(2+) as a cofactor.

The catalysed reaction is dUTP + H2O = dUMP + diphosphate + H(+). The protein operates within pyrimidine metabolism; dUMP biosynthesis; dUMP from dCTP (dUTP route): step 2/2. This enzyme is involved in nucleotide metabolism: it produces dUMP, the immediate precursor of thymidine nucleotides and it decreases the intracellular concentration of dUTP so that uracil cannot be incorporated into DNA. This is Deoxyuridine 5'-triphosphate nucleotidohydrolase from Bartonella henselae (strain ATCC 49882 / DSM 28221 / CCUG 30454 / Houston 1) (Rochalimaea henselae).